The primary structure comprises 450 residues: Sorting nexin-4 (450 aa).

At M1 the chain carries N-acetylmethionine. The interval 1-46 (MEQAPPDPEKLLQPGPLEPLGGPGAVLEAAVGEENEGTREDGSGVD) is disordered. Low complexity predominate over residues 11-20 (LLQPGPLEPL). In terms of domain architecture, PX spans 61–187 (SVSEAEKRTG…YSFLTQEGNW (127 aa)). 4 residues coordinate a 1,2-diacyl-sn-glycero-3-phospho-(1D-myo-inositol-3-phosphate): R106, S108, K132, and R154.

The protein belongs to the sorting nexin family. As to quaternary structure, heterodimer; heterodimerizes with SNX7 or SNX30. Interacts with WWC1/KIBRA. Identified in a complex with WWC1/KIBRA and dynein components DYNLL1 and DYNC1I2. Interacts with BIN1.

The protein resides in the early endosome. It localises to the early endosome membrane. Functionally, involved in the regulation of endocytosis and in several stages of intracellular trafficking. Plays a role in recycling endocytosed transferrin receptor and prevent its degradation. Involved in autophagosome assembly by regulating trafficking and recycling of phospholipid scramblase ATG9A. In Mus musculus (Mouse), this protein is Sorting nexin-4.